The following is a 464-amino-acid chain: L-2-hydroxyglutarate dehydrogenase, mitochondrial (464 aa).

The N-terminal 52 residues, 1–52, are a transit peptide targeting the mitochondrion; that stretch reads MWPTLRYVGGVCGLARYCVAGGFLRASGPASGVPGLLCGGGRRSSSTSSFDI. Lys105 and Lys174 each carry N6-acetyllysine.

It belongs to the L2HGDH family. FAD is required as a cofactor.

The protein resides in the mitochondrion. The enzyme catalyses (S)-2-hydroxyglutarate + A = 2-oxoglutarate + AH2. The polypeptide is L-2-hydroxyglutarate dehydrogenase, mitochondrial (L2hgdh) (Mus musculus (Mouse)).